The primary structure comprises 247 residues: Probable transcriptional regulatory protein Spro_2779 (247 aa).

It belongs to the TACO1 family.

The protein resides in the cytoplasm. This Serratia proteamaculans (strain 568) protein is Probable transcriptional regulatory protein Spro_2779.